The following is a 1798-amino-acid chain: U3 small nucleolar RNA-associated protein 10 (1798 aa).

An HEAT 1 repeat occupies 583–620 (LDFQALLPFLLVTLTDPSERVRREAAAALAAVGSLYKK). 2 consecutive transmembrane segments (helical) span residues 942–962 (IQSG…AIVN) and 998–1018 (ALLL…HSVM). HEAT repeat units follow at residues 1042–1079 (QTID…AFEH), 1249–1286 (LTLV…QNPE), 1293–1331 (IRVL…KYGK), and 1754–1791 (ALLP…VLGE).

Belongs to the HEATR1/UTP10 family. As to quaternary structure, component of the ribosomal small subunit (SSU) processome.

It localises to the nucleus. The protein resides in the nucleolus. It is found in the membrane. Functionally, involved in nucleolar processing of pre-18S ribosomal RNA. Involved in ribosome biosynthesis. This Aspergillus fumigatus (strain ATCC MYA-4609 / CBS 101355 / FGSC A1100 / Af293) (Neosartorya fumigata) protein is U3 small nucleolar RNA-associated protein 10.